The sequence spans 218 residues: ATP-dependent dethiobiotin synthetase BioD (218 aa).

Position 10–15 (10–15) interacts with ATP; sequence NAGKTT. Thr14 serves as a coordination point for Mg(2+). Lys35 is a catalytic residue. Residue Thr39 participates in substrate binding. Residues His52 and Glu116 each coordinate Mg(2+). ATP is bound by residues 116 to 119 and 176 to 177; these read EGAG and LR.

This sequence belongs to the dethiobiotin synthetase family. As to quaternary structure, homodimer. Mg(2+) serves as cofactor.

The protein resides in the cytoplasm. It carries out the reaction (7R,8S)-7,8-diammoniononanoate + CO2 + ATP = (4R,5S)-dethiobiotin + ADP + phosphate + 3 H(+). The protein operates within cofactor biosynthesis; biotin biosynthesis; biotin from 7,8-diaminononanoate: step 1/2. Functionally, catalyzes a mechanistically unusual reaction, the ATP-dependent insertion of CO2 between the N7 and N8 nitrogen atoms of 7,8-diaminopelargonic acid (DAPA, also called 7,8-diammoniononanoate) to form a ureido ring. This chain is ATP-dependent dethiobiotin synthetase BioD, found in Helicobacter pylori (strain Shi470).